The chain runs to 1261 residues: Myosin-1 (1261 aa).

Residues Met1 to Ala39 form a disordered region. The Myosin motor domain maps to Ile49–Asp728. Gly142–Thr149 lines the ATP pocket. The residue at position 370 (Ser370) is a Phosphoserine. Residues Ser417 to Ala499 form an actin-binding region. IQ domains lie at His732–Cys752 and Ala753–Gln778. Residues Arg786–Gly973 enclose the TH1 domain. Disordered regions lie at residues Ala956–Tyr1093 and Tyr1139–Trp1261. Composition is skewed to pro residues over residues Arg1019–Gln1029, Ile1038–Gln1052, Ala1072–Pro1084, and Thr1147–Ala1159. In terms of domain architecture, SH3 spans Pro1084–Ala1145. The segment covering Pro1160 to Lys1181 has biased composition (low complexity). Polar residues predominate over residues Val1212–Asn1233. A compositionally biased stretch (low complexity) spans Ala1234–Ala1243.

It belongs to the TRAFAC class myosin-kinesin ATPase superfamily. Myosin family. Post-translationally, phosphorylation of the TEDS site (Ser-370) is required for the polarization of the actin cytoskeleton. Phosphorylation probably activates the myosin-I ATPase activity.

Its subcellular location is the cytoplasm. It is found in the cytoskeleton. The protein localises to the actin patch. Its function is as follows. Type-I myosin implicated in the organization of the actin cytoskeleton. Required for proper actin cytoskeleton polarization. At the cell cortex, assembles in patch-like structures together with proteins from the actin-polymerizing machinery and promotes actin assembly. Functions as actin nucleation-promoting factor (NPF) for the Arp2/3 complex. Plays an important role in polarized growth, spore germination, hyphal morphogenesis, and septal wall formation. This is Myosin-1 (myoA) from Aspergillus oryzae (strain ATCC 42149 / RIB 40) (Yellow koji mold).